The following is a 565-amino-acid chain: DNA repair protein RAD7 (565 aa).

Disordered regions lie at residues 1 to 22 and 41 to 68; these read MYRS…PNSA and WYQR…FTAE. The hydrophilic stretch occupies residues 1-200; it reads MYRSRNRPKR…SKLVFNKLRD (200 aa). Basic and acidic residues predominate over residues 47-62; sequence KKQEDATDEKKGKAED. Phosphoserine occurs at positions 64 and 85. The segment at 105–137 is disordered; it reads ADSDEEEYETSHISDTPVSLSSANDRESLTKKR. Polar residues predominate over residues 115-127; the sequence is SHISDTPVSLSSA.

The protein to S.pombe SpCC613.14. As to quaternary structure, component of the global genome repair (GGR) complex composed of at least ABF1, RAD7 and RAD16. Interacts with ELC1.

Component of the global genome repair (GGR) complex which promotes global genome nucleotide excision repair (GG-NER) which removes DNA damage from nontranscribing DNA. This protein is one of 10 proteins (RAD1, 2,3,4,7,10,14, 16,23 and MMS19) involved in excision repair of DNA damaged with UV light, bulky adducts, or cross-linking agents. The chain is DNA repair protein RAD7 (RAD7) from Saccharomyces cerevisiae (strain ATCC 204508 / S288c) (Baker's yeast).